A 259-amino-acid chain; its full sequence is 14-3-3-like protein (259 aa).

It belongs to the 14-3-3 family.

The chain is 14-3-3-like protein from Helianthus annuus (Common sunflower).